A 47-amino-acid chain; its full sequence is Lysis protein for colicin E5 (47 aa).

Positions 1-19 are cleaved as a signal peptide; that stretch reads MKKITWIILLLLAAIILAA. Cys20 is lipidated: N-palmitoyl cysteine. The S-diacylglycerol cysteine moiety is linked to residue Cys20.

The protein resides in the cell outer membrane. Its function is as follows. Lysis proteins are required for both colicin release and partial cell lysis. This is Lysis protein for colicin E5 (lys) from Escherichia coli.